Here is a 793-residue protein sequence, read N- to C-terminus: RNA-binding protein spenito (793 aa).

2 disordered regions span residues 1–93 and 243–296; these read MSSH…PPAE and HHDY…KKDK. Over residues 25–42 the composition is skewed to low complexity; sequence SRSPGPASRSSLSRNSRS. The span at 257 to 268 shows a compositional bias: basic residues; it reads RGGHPHHLHGHA. Residues 285-296 are compositionally biased toward basic and acidic residues; that stretch reads APYEKPESKKDK. 2 RRM domains span residues 314 to 391 and 395 to 469; these read RTLF…YGKV and TRMW…FAEL. Positions 507–623 are disordered; that stretch reads YAPRGGYSPY…RNDALASAST (117 aa). Over residues 526-536 the composition is skewed to basic residues; that stretch reads GGYRGRGRGMY. The span at 566-593 shows a compositional bias: basic and acidic residues; it reads DEWRRPPGESYDRGARSSSREPGVERSR. The SPOC domain maps to 624-791; it reads VPDVARKCST…HLVIVVVRGG (168 aa).

The protein belongs to the RRM Spen family. In terms of assembly, component of the WMM complex, a N6-methyltransferase complex composed of a catalytic subcomplex, named MAC, and of an associated subcomplex, named MACOM. The MAC subcomplex is composed of Ime4/Mettl3 and Mettl14. The MACOM subcomplex is composed of fl(2)d, Flacc/Xio, Hakai, vir, and, in some cases of nito. Interacts with Sxl. Interacts with Hipk; leading to phosphorylation. Post-translationally, phosphorylated by Hipk at Ser-23, Ser-25 and/or Ser-27; the precise position if phosphorylation sites is unknown. Widely expressed. Shows some enrichment in the central nervous system.

The protein resides in the nucleus. Its function is as follows. RNA-binding protein that acts as an associated component of the WMM complex, a complex that mediates N6-methyladenosine (m6A) methylation of mRNAs. M6a modification plays a role in the efficiency of mRNA splicing and is required for sex determination. In the WMM complex, may act by binding target RNAs and recruiting the WMM complex. Required for sex determination and dosage compensation via Sxl alternative splicing: m6A methylation acts as a key regulator of Sxl pre-mRNA and promotes female-specific alternative splicing of Sxl, which determines female physiognomy. M6A methylation is also required for neuronal functions. Acts as a positive regulator of canonical Wg signaling during wing disk and eye development. This Drosophila melanogaster (Fruit fly) protein is RNA-binding protein spenito.